The following is a 513-amino-acid chain: Fructose import ATP-binding protein FruK (513 aa).

ABC transporter domains lie at 8–244 and 262–505; these read VVMK…IGKS and PGEK…IANT. Position 40 to 47 (40 to 47) interacts with ATP; it reads GENGAGKS.

It belongs to the ABC transporter superfamily. The complex is composed of an ATP-binding protein (FruK), two transmembrane proteins (FruF and FruG) and a solute-binding protein (FruE).

Its subcellular location is the cell membrane. It catalyses the reaction D-fructose(out) + ATP + H2O = D-fructose(in) + ADP + phosphate + H(+). Its function is as follows. Part of the high-affinity ABC transporter complex FruEKFG involved in fructose uptake. Can also transport ribose and xylose, with lower affinity. Probably responsible for energy coupling to the transport system. The sequence is that of Fructose import ATP-binding protein FruK from Bifidobacterium longum (strain NCC 2705).